A 251-amino-acid polypeptide reads, in one-letter code: Hydroxyacylglutathione hydrolase (251 aa).

Residues His-53, His-55, Asp-57, His-58, His-110, Asp-127, and His-165 each coordinate Zn(2+).

It belongs to the metallo-beta-lactamase superfamily. Glyoxalase II family. Monomer. The cofactor is Zn(2+).

It carries out the reaction an S-(2-hydroxyacyl)glutathione + H2O = a 2-hydroxy carboxylate + glutathione + H(+). Its pathway is secondary metabolite metabolism; methylglyoxal degradation; (R)-lactate from methylglyoxal: step 2/2. In terms of biological role, thiolesterase that catalyzes the hydrolysis of S-D-lactoyl-glutathione to form glutathione and D-lactic acid. The protein is Hydroxyacylglutathione hydrolase of Escherichia coli (strain SE11).